The following is a 725-amino-acid chain: Exocyst complex component 8 (725 aa).

Ser19 is subject to Phosphoserine. A disordered region spans residues 137–159; it reads AGFFSTPGGASRDGSGPGEEGKQ. Thr142 is modified (phosphothreonine). The PH domain occupies 182-282; the sequence is YLVYNGDLVE…WLEVLEDTKR (101 aa). Positions 285-328 are disordered; it reads SEKRRREQEEAAAPRGPPQVTSKATNPFEDDEEEEPAVPEVEEE. Residues 312–328 are compositionally biased toward acidic residues; sequence FEDDEEEEPAVPEVEEE.

It belongs to the EXO84 family. The exocyst complex is composed of EXOC1, EXOC2, EXOC3, EXOC4, EXOC5, EXOC6, EXOC7 and EXOC8. Interacts (via PH domain) with GTP-bound RALA and RALB. Interacts with SH3BP1; required for the localization of both SH3BP1 and the exocyst to the leading edge of migrating cells.

It localises to the cytoplasm. The protein resides in the perinuclear region. The protein localises to the cell projection. Its subcellular location is the growth cone. Its function is as follows. Component of the exocyst complex involved in the docking of exocytic vesicles with fusion sites on the plasma membrane. The sequence is that of Exocyst complex component 8 (EXOC8) from Homo sapiens (Human).